The primary structure comprises 466 residues: Glutamate--tRNA ligase (466 aa).

The short motif at 10-20 (PSPTGALHIGG) is the 'HIGH' region element. The Zn(2+) site is built by Cys-99, Cys-101, Cys-126, and Asp-128. Positions 239 to 243 (KLSKR) match the 'KMSKS' region motif. Lys-242 serves as a coordination point for ATP.

Belongs to the class-I aminoacyl-tRNA synthetase family. Glutamate--tRNA ligase type 1 subfamily. As to quaternary structure, monomer. Requires Zn(2+) as cofactor.

Its subcellular location is the cytoplasm. It carries out the reaction tRNA(Glu) + L-glutamate + ATP = L-glutamyl-tRNA(Glu) + AMP + diphosphate. Functionally, catalyzes the attachment of glutamate to tRNA(Glu) in a two-step reaction: glutamate is first activated by ATP to form Glu-AMP and then transferred to the acceptor end of tRNA(Glu). This is Glutamate--tRNA ligase from Pelagibacter ubique (strain HTCC1062).